An 82-amino-acid polypeptide reads, in one-letter code: Small ribosomal subunit protein uS17 (82 aa).

It belongs to the universal ribosomal protein uS17 family. Part of the 30S ribosomal subunit.

One of the primary rRNA binding proteins, it binds specifically to the 5'-end of 16S ribosomal RNA. The sequence is that of Small ribosomal subunit protein uS17 from Rickettsia rickettsii (strain Iowa).